We begin with the raw amino-acid sequence, 276 residues long: 3-methyl-2-oxobutanoate hydroxymethyltransferase (276 aa).

2 residues coordinate Mg(2+): Asp46 and Asp85. 3-methyl-2-oxobutanoate contacts are provided by residues 46–47, Asp85, and Lys115; that span reads DS. Glu117 contacts Mg(2+). Residue Glu184 is the Proton acceptor of the active site.

It belongs to the PanB family. Homodecamer; pentamer of dimers. Mg(2+) serves as cofactor.

It is found in the cytoplasm. It carries out the reaction 3-methyl-2-oxobutanoate + (6R)-5,10-methylene-5,6,7,8-tetrahydrofolate + H2O = 2-dehydropantoate + (6S)-5,6,7,8-tetrahydrofolate. The protein operates within cofactor biosynthesis; (R)-pantothenate biosynthesis; (R)-pantoate from 3-methyl-2-oxobutanoate: step 1/2. Functionally, catalyzes the reversible reaction in which hydroxymethyl group from 5,10-methylenetetrahydrofolate is transferred onto alpha-ketoisovalerate to form ketopantoate. In Heliobacterium modesticaldum (strain ATCC 51547 / Ice1), this protein is 3-methyl-2-oxobutanoate hydroxymethyltransferase.